The primary structure comprises 158 residues: MANKVAQEISTLIEPLINAQQLLLWDVSYTKEGGQKVLRILIDKRNHEFITMDDITTFTQAVNELLDTIEPDPIPEAYMLDISSPGADRPLIRPWHYEWAKASGENILVAFFVAKNGQKKWQGKIETIDDKGITLTTSSETIVCTFDEIAKAVLDTQF.

This sequence belongs to the RimP family.

It localises to the cytoplasm. Functionally, required for maturation of 30S ribosomal subunits. The sequence is that of Ribosome maturation factor RimP from Leuconostoc citreum (strain KM20).